The primary structure comprises 397 residues: Odorant receptor 2a (397 aa).

The Cytoplasmic segment spans residues 1 to 38; that stretch reads MEKQEDFKLNTHSAVYYHWRVWELTGLMRPPGVSSLLY. The chain crosses the membrane as a helical span at residues 39 to 59; the sequence is VVYSITVNLVVTVLFPLSLLA. The Extracellular portion of the chain corresponds to 60-72; that stretch reads RLLFTTNMAGLCE. A helical membrane pass occupies residues 73–92; the sequence is NLTITITDIVANLKFANVYM. Residues 93-131 are Cytoplasmic-facing; that stretch reads VRKQLHEIRSLLRLMDARARLVGDPEEISALRKEVNIAQ. Residues 132 to 150 traverse the membrane as a helical segment; that stretch reads GTFRTFASIFVFGTTLSCV. The Extracellular segment spans residues 151 to 176; the sequence is RVVVRPDRELLYPAWFGVDWMHSTRN. The helical transmembrane segment at 177-197 threads the bilayer; the sequence is YVLINIYQLFGLIVQAIQNCA. Over 198–272 the chain is Cytoplasmic; that stretch reads SDSYPPAFLC…IIQRVLSVPC (75 aa). Residues 273-293 traverse the membrane as a helical segment; the sequence is MAQFVCSAAVQCTVAMHFLYV. Topologically, residues 294-301 are extracellular; sequence ADDHDHTA. The helical transmembrane segment at 302–322 threads the bilayer; sequence MIISIVFFSAVTLEVFVICYF. The Cytoplasmic segment spans residues 323-363; it reads GDRMRTQSEALCDAFYDCNWIEQLPKFKRELLFTLARTQRP. Residues 364 to 383 traverse the membrane as a helical segment; the sequence is SLIYAGNYIALSLETFEQVM. The Extracellular portion of the chain corresponds to 384 to 397; that stretch reads RFTYSVFTLLLRAK.

This sequence belongs to the insect chemoreceptor superfamily. Heteromeric odorant receptor channel (TC 1.A.69) family. Or2a subfamily. In terms of assembly, interacts with Orco. Complexes exist early in the endomembrane system in olfactory sensory neurons (OSNs), coupling these complexes to the conserved ciliary trafficking pathway. Expressed in 20 sensory neurons on the distal edge of the antenna.

It localises to the cell membrane. In terms of biological role, odorant receptor which mediates acceptance or avoidance behavior, depending on its substrates. The odorant receptor repertoire encodes a large collection of odor stimuli that vary widely in identity, intensity, and duration. May form a complex with Orco to form odorant-sensing units, providing sensitive and prolonged odorant signaling and calcium permeability. This chain is Odorant receptor 2a (Or2a), found in Drosophila melanogaster (Fruit fly).